The following is a 121-amino-acid chain: UPF0102 protein BT_2236 (121 aa).

This sequence belongs to the UPF0102 family.

The sequence is that of UPF0102 protein BT_2236 from Bacteroides thetaiotaomicron (strain ATCC 29148 / DSM 2079 / JCM 5827 / CCUG 10774 / NCTC 10582 / VPI-5482 / E50).